A 461-amino-acid polypeptide reads, in one-letter code: Ribosomal protein uS12 methylthiotransferase RimO (461 aa).

Residues 13–128 (PKVGFVSLGC…VMQHVHMHLP (116 aa)) form the MTTase N-terminal domain. Residues Cys-22, Cys-58, Cys-87, Cys-159, Cys-163, and Cys-166 each contribute to the [4Fe-4S] cluster site. Residues 145–390 (LTPRHYAYLK…MEVAEEVSAK (246 aa)) enclose the Radical SAM core domain. The 69-residue stretch at 393–461 (AKKVGKTLKV…ADGHDLWGEV (69 aa)) folds into the TRAM domain.

It belongs to the methylthiotransferase family. RimO subfamily. The cofactor is [4Fe-4S] cluster.

The protein resides in the cytoplasm. It catalyses the reaction L-aspartate(89)-[ribosomal protein uS12]-hydrogen + (sulfur carrier)-SH + AH2 + 2 S-adenosyl-L-methionine = 3-methylsulfanyl-L-aspartate(89)-[ribosomal protein uS12]-hydrogen + (sulfur carrier)-H + 5'-deoxyadenosine + L-methionine + A + S-adenosyl-L-homocysteine + 2 H(+). Its function is as follows. Catalyzes the methylthiolation of an aspartic acid residue of ribosomal protein uS12. This chain is Ribosomal protein uS12 methylthiotransferase RimO, found in Paraburkholderia xenovorans (strain LB400).